The following is a 204-amino-acid chain: uncharacterized protein (204 aa).

Disordered stretches follow at residues 1–37 (MRAL…GSVS) and 159–204 (GYRP…DGEL). The segment covering 28-37 (GRGPRAGSVS) has biased composition (low complexity). The 88-residue stretch at 88–175 (PYRLYVERLD…LPKEKWPAEA (88 aa)) folds into the WGR domain. 2 stretches are compositionally biased toward basic and acidic residues: residues 166 to 179 (LPKE…EHES) and 188 to 204 (PEGH…DGEL).

This is an uncharacterized protein from Sinorhizobium fredii (strain NBRC 101917 / NGR234).